A 254-amino-acid polypeptide reads, in one-letter code: MLLAIDVGNTNTVLGAYEGPSLRQHWRIETSHTRTYDEYGILVRQLFQVAGLDPAAVTAVAVSSVVPPLAFTLEQMSLRYFKVKPLFVGPGVKTGMSILYENPREVGADRVVNAVAAFERWRCGLIVVDFGTATTFDAVSPKGEYLGGAICPGIAISMDALFRHASKLPRVEFQRPPHVIGKNTVASIQSGLVYGYVGLVDGICARMADELGFAPKVVATGGLAALIAGVSKTVSEVDEHLTLDGLRLLHERNR.

6-13 provides a ligand contact to ATP; it reads DVGNTNTV. Substrate contacts are provided by residues Tyr-100 and 107-110; that span reads GADR. The active-site Proton acceptor is Asp-109. Asp-129 contributes to the K(+) binding site. Position 132 (Thr-132) interacts with ATP. Thr-184 contacts substrate.

This sequence belongs to the type III pantothenate kinase family. Homodimer. NH4(+) is required as a cofactor. Requires K(+) as cofactor.

It is found in the cytoplasm. It catalyses the reaction (R)-pantothenate + ATP = (R)-4'-phosphopantothenate + ADP + H(+). It participates in cofactor biosynthesis; coenzyme A biosynthesis; CoA from (R)-pantothenate: step 1/5. Functionally, catalyzes the phosphorylation of pantothenate (Pan), the first step in CoA biosynthesis. The protein is Type III pantothenate kinase of Anaeromyxobacter sp. (strain Fw109-5).